We begin with the raw amino-acid sequence, 200 residues long: Glycerol-3-phosphate acyltransferase (200 aa).

The next 5 membrane-spanning stretches (helical) occupy residues alanine 8 to leucine 28, leucine 57 to alanine 77, isoleucine 88 to glycine 108, phenylalanine 114 to leucine 134, and phenylalanine 159 to tryptophan 179.

It belongs to the PlsY family. In terms of assembly, probably interacts with PlsX.

It localises to the cell inner membrane. It carries out the reaction an acyl phosphate + sn-glycerol 3-phosphate = a 1-acyl-sn-glycero-3-phosphate + phosphate. It functions in the pathway lipid metabolism; phospholipid metabolism. In terms of biological role, catalyzes the transfer of an acyl group from acyl-phosphate (acyl-PO(4)) to glycerol-3-phosphate (G3P) to form lysophosphatidic acid (LPA). This enzyme utilizes acyl-phosphate as fatty acyl donor, but not acyl-CoA or acyl-ACP. The polypeptide is Glycerol-3-phosphate acyltransferase (Roseobacter denitrificans (strain ATCC 33942 / OCh 114) (Erythrobacter sp. (strain OCh 114))).